The primary structure comprises 217 residues: Thiamine-phosphate synthase (217 aa).

4-amino-2-methyl-5-(diphosphooxymethyl)pyrimidine-binding positions include 39 to 43 (QYRDK) and asparagine 71. Mg(2+) is bound by residues aspartate 72 and aspartate 91. Threonine 110 contributes to the 4-amino-2-methyl-5-(diphosphooxymethyl)pyrimidine binding site. 137–139 (SNT) contributes to the 2-[(2R,5Z)-2-carboxy-4-methylthiazol-5(2H)-ylidene]ethyl phosphate binding site. Lysine 140 provides a ligand contact to 4-amino-2-methyl-5-(diphosphooxymethyl)pyrimidine. Position 167 (glycine 167) interacts with 2-[(2R,5Z)-2-carboxy-4-methylthiazol-5(2H)-ylidene]ethyl phosphate.

It belongs to the thiamine-phosphate synthase family. Mg(2+) serves as cofactor.

It catalyses the reaction 2-[(2R,5Z)-2-carboxy-4-methylthiazol-5(2H)-ylidene]ethyl phosphate + 4-amino-2-methyl-5-(diphosphooxymethyl)pyrimidine + 2 H(+) = thiamine phosphate + CO2 + diphosphate. The catalysed reaction is 2-(2-carboxy-4-methylthiazol-5-yl)ethyl phosphate + 4-amino-2-methyl-5-(diphosphooxymethyl)pyrimidine + 2 H(+) = thiamine phosphate + CO2 + diphosphate. It carries out the reaction 4-methyl-5-(2-phosphooxyethyl)-thiazole + 4-amino-2-methyl-5-(diphosphooxymethyl)pyrimidine + H(+) = thiamine phosphate + diphosphate. It participates in cofactor biosynthesis; thiamine diphosphate biosynthesis; thiamine phosphate from 4-amino-2-methyl-5-diphosphomethylpyrimidine and 4-methyl-5-(2-phosphoethyl)-thiazole: step 1/1. Condenses 4-methyl-5-(beta-hydroxyethyl)thiazole monophosphate (THZ-P) and 2-methyl-4-amino-5-hydroxymethyl pyrimidine pyrophosphate (HMP-PP) to form thiamine monophosphate (TMP). The chain is Thiamine-phosphate synthase from Saccharophagus degradans (strain 2-40 / ATCC 43961 / DSM 17024).